Consider the following 488-residue polypeptide: ATP synthase subunit beta (488 aa).

164-171 (GGAGVGKT) contributes to the ATP binding site.

It belongs to the ATPase alpha/beta chains family. In terms of assembly, F-type ATPases have 2 components, CF(1) - the catalytic core - and CF(0) - the membrane proton channel. CF(1) has five subunits: alpha(3), beta(3), gamma(1), delta(1), epsilon(1). CF(0) has four main subunits: a(1), b(1), b'(1) and c(9-12).

It localises to the cellular thylakoid membrane. It carries out the reaction ATP + H2O + 4 H(+)(in) = ADP + phosphate + 5 H(+)(out). Functionally, produces ATP from ADP in the presence of a proton gradient across the membrane. The catalytic sites are hosted primarily by the beta subunits. This Prochlorococcus marinus (strain SARG / CCMP1375 / SS120) protein is ATP synthase subunit beta.